The following is a 179-amino-acid chain: Large ribosomal subunit protein uL6 (179 aa).

It belongs to the universal ribosomal protein uL6 family. Part of the 50S ribosomal subunit.

Its function is as follows. This protein binds to the 23S rRNA, and is important in its secondary structure. It is located near the subunit interface in the base of the L7/L12 stalk, and near the tRNA binding site of the peptidyltransferase center. In Geotalea uraniireducens (strain Rf4) (Geobacter uraniireducens), this protein is Large ribosomal subunit protein uL6.